A 153-amino-acid polypeptide reads, in one-letter code: Acetylacetone-cleaving enzyme (153 aa).

Homotetramer. The cofactor is Fe cation.

It catalyses the reaction acetylacetone + O2 = methylglyoxal + acetate + H(+). It functions in the pathway xenobiotic degradation; acetylacetone degradation. Cleaves acetylacetone to equimolar amounts of methylglyoxal and acetate, consuming one equivalent of molecular oxygen. The polypeptide is Acetylacetone-cleaving enzyme (dke1) (Acinetobacter johnsonii).